Here is a 519-residue protein sequence, read N- to C-terminus: Developmental regulatory protein wetA (519 aa).

Disordered regions lie at residues 105-165 (PSRP…MRSS), 270-294 (PSSA…WQSD), 301-320 (LSFT…PMPS), 325-344 (QQAS…NVGN), 389-452 (SQIH…GSNK), and 470-495 (LTGV…RRRK). The span at 108–118 (PTATHALSTSP) shows a compositional bias: low complexity. Positions 155–165 (QSFSPSLMRSS) are enriched in polar residues. A compositionally biased stretch (polar residues) spans 301–315 (LSFTPDLQGQDSQWW). The span at 389 to 400 (SQIHNVSRSPSL) shows a compositional bias: polar residues. A compositionally biased stretch (basic residues) spans 419-428 (PTHRRTHSRK). Over residues 435-452 (NAPKPAKASGSSSRGSNK) the composition is skewed to low complexity.

Belongs to the wetA family.

Functionally, brlA, abaA and wetA are pivotal regulators of conidiophore development and conidium maturation. They act individually and together to regulate their own expression and that of numerous other sporulation-specific genes. This is Developmental regulatory protein wetA from Penicillium camembertii.